Consider the following 96-residue polypeptide: Aspartyl/glutamyl-tRNA(Asn/Gln) amidotransferase subunit C (96 aa).

It belongs to the GatC family. Heterotrimer of A, B and C subunits.

It carries out the reaction L-glutamyl-tRNA(Gln) + L-glutamine + ATP + H2O = L-glutaminyl-tRNA(Gln) + L-glutamate + ADP + phosphate + H(+). The enzyme catalyses L-aspartyl-tRNA(Asn) + L-glutamine + ATP + H2O = L-asparaginyl-tRNA(Asn) + L-glutamate + ADP + phosphate + 2 H(+). Its function is as follows. Allows the formation of correctly charged Asn-tRNA(Asn) or Gln-tRNA(Gln) through the transamidation of misacylated Asp-tRNA(Asn) or Glu-tRNA(Gln) in organisms which lack either or both of asparaginyl-tRNA or glutaminyl-tRNA synthetases. The reaction takes place in the presence of glutamine and ATP through an activated phospho-Asp-tRNA(Asn) or phospho-Glu-tRNA(Gln). The protein is Aspartyl/glutamyl-tRNA(Asn/Gln) amidotransferase subunit C of Bacillus licheniformis (strain ATCC 14580 / DSM 13 / JCM 2505 / CCUG 7422 / NBRC 12200 / NCIMB 9375 / NCTC 10341 / NRRL NRS-1264 / Gibson 46).